Consider the following 336-residue polypeptide: Ribosomal RNA large subunit methyltransferase F (336 aa).

This sequence belongs to the methyltransferase superfamily. METTL16/RlmF family.

It localises to the cytoplasm. It carries out the reaction adenosine(1618) in 23S rRNA + S-adenosyl-L-methionine = N(6)-methyladenosine(1618) in 23S rRNA + S-adenosyl-L-homocysteine + H(+). In terms of biological role, specifically methylates the adenine in position 1618 of 23S rRNA. The protein is Ribosomal RNA large subunit methyltransferase F of Yersinia pseudotuberculosis serotype I (strain IP32953).